The following is a 459-amino-acid chain: Exodeoxyribonuclease 7 large subunit (459 aa).

Belongs to the XseA family. As to quaternary structure, heterooligomer composed of large and small subunits.

Its subcellular location is the cytoplasm. The enzyme catalyses Exonucleolytic cleavage in either 5'- to 3'- or 3'- to 5'-direction to yield nucleoside 5'-phosphates.. In terms of biological role, bidirectionally degrades single-stranded DNA into large acid-insoluble oligonucleotides, which are then degraded further into small acid-soluble oligonucleotides. This chain is Exodeoxyribonuclease 7 large subunit, found in Pseudomonas fluorescens (strain SBW25).